A 427-amino-acid chain; its full sequence is Adenylosuccinate synthetase (427 aa).

GTP contacts are provided by residues 11–17 and 39–41; these read GDEGKGK and GHT. Residue Asp12 is the Proton acceptor of the active site. Residues Asp12 and Gly39 each contribute to the Mg(2+) site. IMP contacts are provided by residues 12-15, 37-40, Thr132, Arg146, Gln223, Thr238, and Arg302; these read DEGK and NAGH. The active-site Proton donor is His40. 298-304 contacts substrate; it reads TTTGRPR. GTP is bound by residues Arg304, 330-332, and 412-414; these read KLD and GVG.

This sequence belongs to the adenylosuccinate synthetase family. As to quaternary structure, homodimer. The cofactor is Mg(2+).

Its subcellular location is the cytoplasm. The catalysed reaction is IMP + L-aspartate + GTP = N(6)-(1,2-dicarboxyethyl)-AMP + GDP + phosphate + 2 H(+). It functions in the pathway purine metabolism; AMP biosynthesis via de novo pathway; AMP from IMP: step 1/2. Functionally, plays an important role in the de novo pathway and in the salvage pathway of purine nucleotide biosynthesis. Catalyzes the first committed step in the biosynthesis of AMP from IMP. This chain is Adenylosuccinate synthetase (purA), found in Dictyostelium discoideum (Social amoeba).